Here is a 489-residue protein sequence, read N- to C-terminus: Cryptochrome DASH (489 aa).

In terms of domain architecture, Photolyase/cryptochrome alpha/beta spans 6–140 (PTVLVWFRND…EAKGYWGSTL (135 aa)).

It belongs to the DNA photolyase class-1 family. FAD serves as cofactor. It depends on (6R)-5,10-methylene-5,6,7,8-tetrahydrofolate as a cofactor.

In terms of biological role, may have a photoreceptor function. Binds DNA; represses transcription of at least 8 genes, including slr0364 and slr1866. Does not encode a DNA photolyase function. Its disruption does not affect circadian rhythm. In Synechocystis sp. (strain ATCC 27184 / PCC 6803 / Kazusa), this protein is Cryptochrome DASH (cry).